The primary structure comprises 466 residues: Dihydrolipoyl dehydrogenase (466 aa).

Residues Glu-34–Cys-42, Lys-51, and Gly-114 contribute to the FAD site. A disulfide bridge connects residues Cys-42 and Cys-47. NAD(+) is bound by residues Gly-180–Ile-184, Glu-203, and Ala-269–Val-272. Residues Asp-311 and Ala-319 each coordinate FAD. His-445 functions as the Proton acceptor in the catalytic mechanism.

Belongs to the class-I pyridine nucleotide-disulfide oxidoreductase family. In terms of assembly, homodimer. Requires FAD as cofactor.

Its subcellular location is the cytoplasm. It catalyses the reaction N(6)-[(R)-dihydrolipoyl]-L-lysyl-[protein] + NAD(+) = N(6)-[(R)-lipoyl]-L-lysyl-[protein] + NADH + H(+). Its function is as follows. Lipoamide dehydrogenase is a component of the alpha-ketoacid dehydrogenase complexes. The polypeptide is Dihydrolipoyl dehydrogenase (lpd) (Zymomonas mobilis subsp. mobilis (strain ATCC 31821 / ZM4 / CP4)).